Reading from the N-terminus, the 419-residue chain is MAAVGVEARPPVTAMEETCNVKGAAAKQGEGLNKYYLQHLDELQRLQREKSYNLNRLEAQRNELNSRVRMLREELQLLQEPGSYVGEVVKVMGKNKVLVKVHPEGKYVVDIDKSIDITKLTPSTRVALRNDSYVLHLVLPSKVDPLVNLMKVEKVPDSTYDMIGGLDQQIKEIKEVIELPIKHPELFESLGIAQPKGVLLYGPPGTGKTLLARAVAHHTDCTFIRVSGSELVQKYIGEGSRMVRELFVMAREHAPSIIFMDEIDSIGSARMESGSGNGDSEVQRTMLELLNQLDGFEASNKIKVLMATNRIDILDQALLRPGRIDRKIEFPNPNEESRFDILKIHSRKMNLMRGIDLKKIAEKMNGASGAELKAVCTEAGMFALRERRVHVTQEDFEMAVAKVMKKDTEKNMSLRKLWK.

202–209 (GPPGTGKT) is a binding site for ATP. K406 participates in a covalent cross-link: Glycyl lysine isopeptide (Lys-Gly) (interchain with G-Cter in ubiquitin).

It belongs to the AAA ATPase family. As to quaternary structure, component of the 19S regulatory particle (RP/PA700) base subcomplex of the 26S proteasome. The 26S proteasome is composed of a core protease (CP), known as the 20S proteasome, capped at one or both ends by the 19S regulatory particle (RP/PA700). The RP/PA700 complex is composed of at least 17 different subunits in two subcomplexes, the base and the lid, which form the portions proximal and distal to the 20S proteolytic core, respectively.

It is found in the cytoplasm. The protein resides in the nucleus. Its function is as follows. The 26S proteasome is involved in the ATP-dependent degradation of ubiquitinated proteins. The regulatory (or ATPase) complex confers ATP dependency and substrate specificity to the 26S complex. This Arabidopsis thaliana (Mouse-ear cress) protein is 26S proteasome regulatory subunit 8 homolog B (RPT6B).